A 328-amino-acid chain; its full sequence is tRNA methyltransferase 10 homolog A (328 aa).

Disordered stretches follow at residues 1–91 and 281–328; these read MSSE…RKRV and HKAC…PVLQ. Ser22 carries the post-translational modification Phosphoserine. Positions 43–83 form a coiled coil; it reads RQLKKLMKQKQWEEQREQRKEKRKEKRKRKKLERRQLESNS. The span at 52-62 shows a compositional bias: basic and acidic residues; that stretch reads KQWEEQREQRK. Basic residues predominate over residues 63–75; sequence EKRKEKRKRKKLE. The SAM-dependent MTase TRM10-type domain maps to 88–278; the sequence is RKRVRRDVAR…TILPQRKGAV (191 aa). A compositionally biased stretch (basic and acidic residues) spans 305-319; sequence ESCRDNPDSPQKDEQ.

This sequence belongs to the class IV-like SAM-binding methyltransferase superfamily. TRM10 family. Interacts with tRNA.

The protein localises to the nucleus. The protein resides in the nucleolus. It catalyses the reaction guanosine(9) in tRNA + S-adenosyl-L-methionine = N(1)-methylguanosine(9) in tRNA + S-adenosyl-L-homocysteine + H(+). In terms of biological role, S-adenosyl-L-methionine-dependent guanine N(1)-methyltransferase that catalyzes the formation of N(1)-methylguanine at position 9 (m1G9) in tRNAs. Probably not able to catalyze formation of N(1)-methyladenine at position 9 (m1A9) in tRNAs. This chain is tRNA methyltransferase 10 homolog A (Trmt10a), found in Mus musculus (Mouse).